Consider the following 340-residue polypeptide: L-threonine 3-dehydrogenase (340 aa).

Cys-38 contacts Zn(2+). Residues Thr-40 and His-43 each act as charge relay system in the active site. Zn(2+)-binding residues include His-63, Glu-64, Cys-93, Cys-96, Cys-99, and Cys-107. NAD(+) is bound by residues Ile-175, Asp-195, Arg-200, 262-264 (LGI), and 286-287 (IY).

This sequence belongs to the zinc-containing alcohol dehydrogenase family. As to quaternary structure, homotetramer. Zn(2+) serves as cofactor.

It is found in the cytoplasm. The catalysed reaction is L-threonine + NAD(+) = (2S)-2-amino-3-oxobutanoate + NADH + H(+). It functions in the pathway amino-acid degradation; L-threonine degradation via oxydo-reductase pathway; glycine from L-threonine: step 1/2. Functionally, catalyzes the NAD(+)-dependent oxidation of L-threonine to 2-amino-3-ketobutyrate. The chain is L-threonine 3-dehydrogenase from Pseudoalteromonas atlantica (strain T6c / ATCC BAA-1087).